An 86-amino-acid chain; its full sequence is MIDGQSLVLAASAIGAGLAMIAGIGAGIGQGFAAGKGAESVGRQPDAQGDIIRTMLLGAAVAETTGIYALVIALLLLFANPLIGML.

Transmembrane regions (helical) follow at residues 8-28 (VLAA…GAGI) and 66-86 (GIYA…IGML).

Belongs to the ATPase C chain family. F-type ATPases have 2 components, F(1) - the catalytic core - and F(0) - the membrane proton channel. F(1) has five subunits: alpha(3), beta(3), gamma(1), delta(1), epsilon(1). F(0) has three main subunits: a(1), b(2) and c(10-14). The alpha and beta chains form an alternating ring which encloses part of the gamma chain. F(1) is attached to F(0) by a central stalk formed by the gamma and epsilon chains, while a peripheral stalk is formed by the delta and b chains.

It is found in the cell membrane. In terms of biological role, f(1)F(0) ATP synthase produces ATP from ADP in the presence of a proton or sodium gradient. F-type ATPases consist of two structural domains, F(1) containing the extramembraneous catalytic core and F(0) containing the membrane proton channel, linked together by a central stalk and a peripheral stalk. During catalysis, ATP synthesis in the catalytic domain of F(1) is coupled via a rotary mechanism of the central stalk subunits to proton translocation. Its function is as follows. Key component of the F(0) channel; it plays a direct role in translocation across the membrane. A homomeric c-ring of between 10-14 subunits forms the central stalk rotor element with the F(1) delta and epsilon subunits. This chain is ATP synthase subunit c, found in Natranaerobius thermophilus (strain ATCC BAA-1301 / DSM 18059 / JW/NM-WN-LF).